A 173-amino-acid polypeptide reads, in one-letter code: Photosystem I assembly protein Ycf3 (173 aa).

TPR repeat units lie at residues 35-68 (AYVY…ETDP), 72-105 (GETL…NPKQ), and 120-153 (GRIA…NPGG).

The protein belongs to the Ycf3 family.

Its subcellular location is the cellular thylakoid membrane. Essential for the assembly of the photosystem I (PSI) complex. May act as a chaperone-like factor to guide the assembly of the PSI subunits. This chain is Photosystem I assembly protein Ycf3, found in Synechococcus sp. (strain CC9902).